Reading from the N-terminus, the 354-residue chain is Transcription factor HHO2 (354 aa).

Acidic residues predominate over residues 93–102 (VQEEEEEDGE). The segment at 93-112 (VQEEEEEDGEHESSPELVNN) is disordered. Over residues 103–112 (HESSPELVNN) the composition is skewed to basic and acidic residues. Residues 212–272 (THRKQRRCWS…HLQKYRLHTR (61 aa)) enclose the HTH myb-type domain. Residues 243–268 (PKQIRDHMKVDGLTNDEVKSHLQKYR) constitute a DNA-binding region (H-T-H motif). The interval 324-354 (VAQSPKRSLERSCNSPAASSSTNTNTSTPVS) is disordered. Low complexity predominate over residues 337-354 (NSPAASSSTNTNTSTPVS).

Its subcellular location is the nucleus. Probable transcription factor involved in phosphate homeostasis. Involved in the regulation of the developmental response of lateral roots, acquisition and/or mobilization of phosphate and expression of a subset of genes involved in phosphate sensing and signaling pathway. Is a target of the transcription factor PHR1. In Arabidopsis thaliana (Mouse-ear cress), this protein is Transcription factor HHO2.